The chain runs to 262 residues: tRNA pseudouridine synthase A (262 aa).

Aspartate 51 acts as the Nucleophile in catalysis. Tyrosine 109 contributes to the substrate binding site.

This sequence belongs to the tRNA pseudouridine synthase TruA family. As to quaternary structure, homodimer.

The enzyme catalyses uridine(38/39/40) in tRNA = pseudouridine(38/39/40) in tRNA. Functionally, formation of pseudouridine at positions 38, 39 and 40 in the anticodon stem and loop of transfer RNAs. The chain is tRNA pseudouridine synthase A from Aliivibrio fischeri (strain ATCC 700601 / ES114) (Vibrio fischeri).